We begin with the raw amino-acid sequence, 384 residues long: GTPase Obg (384 aa).

Positions 1–159 (MKFIDEAKIE…RSLQLELKVL (159 aa)) constitute an Obg domain. The disordered stretch occupies residues 20–46 (ATSFRREKFVPRGGPDGGDGGKGGSVW). Over residues 33 to 43 (GPDGGDGGKGG) the composition is skewed to gly residues. One can recognise an OBG-type G domain in the interval 160–348 (ADVGLLGMPN…LVHQINQYLT (189 aa)). GTP is bound by residues 166-173 (GMPNAGKS), 191-195 (FTTLH), 213-216 (DIPG), 284-287 (NKLD), and 329-331 (SAL). The Mg(2+) site is built by Ser173 and Thr193.

This sequence belongs to the TRAFAC class OBG-HflX-like GTPase superfamily. OBG GTPase family. As to quaternary structure, monomer. Requires Mg(2+) as cofactor.

It is found in the cytoplasm. Its function is as follows. An essential GTPase which binds GTP, GDP and possibly (p)ppGpp with moderate affinity, with high nucleotide exchange rates and a fairly low GTP hydrolysis rate. Plays a role in control of the cell cycle, stress response, ribosome biogenesis and in those bacteria that undergo differentiation, in morphogenesis control. The polypeptide is GTPase Obg (Neisseria meningitidis serogroup C (strain 053442)).